A 431-amino-acid polypeptide reads, in one-letter code: Beta-lactamase hydrolase-like protein (431 aa).

Residues His212, His214, and His286 each contribute to the Zn(2+) site. Asp309 lines the substrate pocket.

Belongs to the metallo-beta-lactamase superfamily. Requires Zn(2+) as cofactor.

Could play a role in cell adherence or biofilm development. The sequence is that of Beta-lactamase hydrolase-like protein from Xylella fastidiosa (strain Temecula1 / ATCC 700964).